The primary structure comprises 407 residues: Phosphopentomutase (407 aa).

Mn(2+) is bound by residues aspartate 10, aspartate 306, histidine 311, aspartate 347, histidine 348, and histidine 359.

This sequence belongs to the phosphopentomutase family. Requires Mn(2+) as cofactor.

The protein resides in the cytoplasm. It catalyses the reaction 2-deoxy-alpha-D-ribose 1-phosphate = 2-deoxy-D-ribose 5-phosphate. The enzyme catalyses alpha-D-ribose 1-phosphate = D-ribose 5-phosphate. It functions in the pathway carbohydrate degradation; 2-deoxy-D-ribose 1-phosphate degradation; D-glyceraldehyde 3-phosphate and acetaldehyde from 2-deoxy-alpha-D-ribose 1-phosphate: step 1/2. Isomerase that catalyzes the conversion of deoxy-ribose 1-phosphate (dRib-1-P) and ribose 1-phosphate (Rib-1-P) to deoxy-ribose 5-phosphate (dRib-5-P) and ribose 5-phosphate (Rib-5-P), respectively. In Salmonella dublin (strain CT_02021853), this protein is Phosphopentomutase.